A 192-amino-acid chain; its full sequence is Fe/S biogenesis protein NfuA (192 aa).

[4Fe-4S] cluster contacts are provided by Cys-149 and Cys-152.

Belongs to the NfuA family. As to quaternary structure, homodimer. Requires [4Fe-4S] cluster as cofactor.

Involved in iron-sulfur cluster biogenesis. Binds a 4Fe-4S cluster, can transfer this cluster to apoproteins, and thereby intervenes in the maturation of Fe/S proteins. Could also act as a scaffold/chaperone for damaged Fe/S proteins. The chain is Fe/S biogenesis protein NfuA from Shewanella sediminis (strain HAW-EB3).